A 664-amino-acid chain; its full sequence is Chaperone protein DnaK (664 aa).

Phosphothreonine; by autocatalysis is present on threonine 201. Disordered regions lie at residues 516–538 (DAEK…NEAD) and 578–664 (APVE…KPND). Basic and acidic residues predominate over residues 578–592 (APVEKIKDASEELSR). 2 stretches are compositionally biased toward low complexity: residues 600-617 (AMQS…ANAQ) and 638-649 (AGNSASSNSNNE).

Belongs to the heat shock protein 70 family.

Its function is as follows. Acts as a chaperone. The protein is Chaperone protein DnaK of Chlamydia caviae (strain ATCC VR-813 / DSM 19441 / 03DC25 / GPIC) (Chlamydophila caviae).